Reading from the N-terminus, the 117-residue chain is Large ribosomal subunit protein bL20 (117 aa).

The protein belongs to the bacterial ribosomal protein bL20 family.

Functionally, binds directly to 23S ribosomal RNA and is necessary for the in vitro assembly process of the 50S ribosomal subunit. It is not involved in the protein synthesizing functions of that subunit. This is Large ribosomal subunit protein bL20 from Rickettsia massiliae (strain Mtu5).